A 264-amino-acid polypeptide reads, in one-letter code: Proliferating cell nuclear antigen (264 aa).

Residues 61 to 80 mediate DNA binding; that stretch reads RCDRNISMGMNLGNMAKMLK.

Belongs to the PCNA family.

It is found in the nucleus. Functionally, this protein is an auxiliary protein of DNA polymerase delta and is involved in the control of eukaryotic DNA replication by increasing the polymerase's processibility during elongation of the leading strand. The polypeptide is Proliferating cell nuclear antigen (Daucus carota (Wild carrot)).